The chain runs to 116 residues: Sperm mitochondrial-associated cysteine-rich protein (116 aa).

A run of 7 repeats spans residues 6–13 (KHSKCCPA), 14–21 (KGNQCCPP), 30–37 (KGNQCCPP), 38–45 (KQNQCCQP), 46–53 (KGSQCCPP), 54–61 (KHNHCCQP), and 62–68 (KPPCCIQ). Residues 6-68 (KHSKCCPAKG…CQPKPPCCIQ (63 aa)) are 7 X 7 (OR 8) AA approximate repeats. Positions 80-116 (VSPLNMESEPNSPQTQDKGCQTQQQPHSPQNESRPSK) are disordered. The span at 93 to 104 (QTQDKGCQTQQQ) shows a compositional bias: low complexity. The span at 105-116 (PHSPQNESRPSK) shows a compositional bias: polar residues.

Testis. Is selectively expressed in the spermatids of seminiferous tubules.

It is found in the cytoplasm. It localises to the mitochondrion membrane. Its function is as follows. Involved in sperm motility. Its absence is associated with genetic background dependent male infertility. Infertility may be due to reduced sperm motility in the female reproductive tract and inability to penetrate the oocyte zona pellucida. The protein is Sperm mitochondrial-associated cysteine-rich protein (SMCP) of Homo sapiens (Human).